We begin with the raw amino-acid sequence, 1118 residues long: Collagenase ColG (1118 aa).

The N-terminal stretch at 1–45 (MKKNILKILMDSYSKESKIQTVRRVTSVSLLAVYLTMNTSSLVLA) is a signal peptide. A propeptide spanning residues 46 to 110 (KPIENTNDTS…KSKSTLRSAS (65 aa)) is cleaved from the precursor. An S1 metalloprotease domain, degrades both FALGPA (furylacryloyl-Leu-Gly-Pro-Ala) and type I collagen region spans residues 111 to 786 (IANTNSEKYD…QYDVVFHGVL (676 aa)). The activator domain required for full activity on collagen stretch occupies residues 119–388 (YDFEYLNGLS…AMERITWDYD (270 aa)). Residues 389–670 (GIGSNGKKVD…IQELADKYQG (282 aa)) are catalytic subdomain. Residues 396–1118 (KVDHDKFLDD…SGNYELRVNK (723 aa)) form a degrades soluble FALGPA peptide (furylacryloyl-Leu-Gly-Pro-Ala) but not type I collagen region. E498 lines the Ca(2+) pocket. Residue H523 coordinates Zn(2+). Residue E524 is part of the active site. H527 contributes to the Zn(2+) binding site. The Ca(2+) site is built by A531, V535, and G537. E555 lines the Zn(2+) pocket. Residues 679-790 (DYLKDHGYKK…VFHGVLTDNA (112 aa)) form a helper subdomain region. The interval 787-882 (TDNADISNNK…SFTIEIKNED (96 aa)) is S2 domain. Ca(2+)-binding residues include N795, K796, D823, D825, D864, E890, E892, N894, D913, D918, A920, D921, E1009, E1011, N1013, D1014, S1032, D1037, R1039, and D1040. The PKD domain maps to 797–885 (APIAKVTGPS…IEIKNEDTTT (89 aa)). The tract at residues 886-1003 (PITKEMEPND…SYSLNIKGLG (118 aa)) is S3a collagen-binding domain. The S3b collagen-binding domain stretch occupies residues 1008 to 1118 (KEKENNDSSD…SGNYELRVNK (111 aa)). A collagen-binding region spans residues 1102-1106 (LVYKY).

Belongs to the peptidase M9B family. Collagenase subfamily. Requires Ca(2+) as cofactor. The cofactor is Zn(2+). Upon purification gives 67 kDa, 78 kDa, 82 kDa and 116 kDa (full-length) proteins all of which have the same N-terminus; only the longest form digests insoluble collagen. At least 2 in vivo isolated forms (C1b and C1c) are missing the second collagen-binding domain, ending on Lys-1006 and Lys-1018 respectively.

The protein resides in the secreted. The enzyme catalyses Digestion of native collagen in the triple helical region at Xaa-|-Gly bonds. With synthetic peptides, a preference is shown for Gly at P3 and P1', Pro and Ala at P2 and P2', and hydroxyproline, Ala or Arg at P3'.. Its activity is regulated as follows. Inhibited by 1-10-phenanthroline. Inhibited by peptidomimetic isoamyl-phosphonyl-Gly-Pro-Ala, which binds to Zn(2+). Inhibited by broad-spectrum zinc metalloprotease inhibitor batimastat. N-aryl mercaptoacetamide-based inhibitors have been isolated that act on clostridial collagenases with submicromolar affinity while having negligibile activity on human collagenases. Functionally, clostridial collagenases are among the most efficient degraders of eukaryotic collagen known; saprophytes use collagen as a carbon source while pathogens additionally digest collagen to aid in host colonization. Has both tripeptidylcarboxypeptidase on Gly-X-Y and endopeptidase activities; the endopeptidase cuts within the triple helix region of collagen while tripeptidylcarboxypeptidase successively digests the exposed ends, thus clostridial collagenases can digest large sections of collagen. Active on soluble type I collagen, insoluble collagen, azocoll, soluble PZ-peptide (all collagenase substrates) and gelatin. The full-length protein has collagenase activity, while the in vivo derived C-terminally truncated shorter versions only act on gelatin. In vitro digestion of soluble calf skin collagen fibrils requires both ColG and ColH; ColG forms missing the second collagen-binding domain are also synergistic with ColH, although their overall efficiency is decreased. The activator domain (residues 119-388) and catalytic subdomain (389-670) open and close around substrate using a Gly-rich hinge (387-397), allowing digestion when the protein is closed. Binding of collagen requires Ca(2+) and is inhibited by EGTA; the collagen-binding domain (CBD, S3a plus S3b) specifically recognizes the triple-helical conformation made by 3 collagen protein chains in the triple-helical region. Isolated CBD (S3a plus S3b) binds collagen fibrils and sheets of many tissues. The protein is Collagenase ColG of Hathewaya histolytica (Clostridium histolyticum).